The chain runs to 596 residues: MNTKGFAQKIQRTFHLIHQSHYTPPPNKISTHVEIFSELLTYVDYEWQRAAIGASRWVELAAEENEIHIPFNTKDERQVNFLIAIIHVAISLYSNSGVEPFADCDLEKILNGDYESSKFDWNVVFDIVLPNDVRLKEKTLKAAVVEEERVEPRPKRREITLGGQRPLQTRDVRSDSDLIVLSKLEAYDDVVERPRQNNTDIIIHRLGLAKMNPASNSILPAKISRIITEQVFGAGVNVDYIARPTEGFISLSTATYTVASYFERGIANYDINAVLDNIIDKTDQLNTTDTVVELPSIPPEDSSIEVATPSHETFFDINTMIYIIMCCGSITNPMIQRLNGIVTRYNTTNYVVSYPDTDDGRKKALAERAVITVDGKYYKCYNDIKADTDKRRILNPAVIKEVMISLRHYCGSVIHYRERMEATHISQVFCLLMGICYGGLDTKKIRCRWFEWPAVSNVPVTSSYAEFKGSNSGLPPYQCRKFTPRTVMTSFAHWNLWAWMLDLAIDKRMSSDRHLSIMKIYVLNAFSHLVLNSSLENSANILGPFPSFSGYTAFTSTSIVRDVSSCQRLAPFLLRMFSLVDYVAAAASSEASGSGV.

The protein resides in the virion. 120 subunits of the putative clamp protein VP8b appear to stabilize the capsid shell. The protein is Structural protein precursor VP8 of Oryza latifolia (Indian wild rice).